The following is a 92-amino-acid chain: Large ribosomal subunit protein eL43 (92 aa).

The C4-type zinc finger occupies 39–60; the sequence is CSFCGKDSMKRAVVGIWSCKRC.

Belongs to the eukaryotic ribosomal protein eL43 family.

The protein is Large ribosomal subunit protein eL43 (RpL37A) of Drosophila melanogaster (Fruit fly).